We begin with the raw amino-acid sequence, 345 residues long: Tetraacyldisaccharide 4'-kinase (345 aa).

An ATP-binding site is contributed by 54–61 (TLGGAGKT).

It belongs to the LpxK family.

The enzyme catalyses a lipid A disaccharide + ATP = a lipid IVA + ADP + H(+). It participates in glycolipid biosynthesis; lipid IV(A) biosynthesis; lipid IV(A) from (3R)-3-hydroxytetradecanoyl-[acyl-carrier-protein] and UDP-N-acetyl-alpha-D-glucosamine: step 6/6. Transfers the gamma-phosphate of ATP to the 4'-position of a tetraacyldisaccharide 1-phosphate intermediate (termed DS-1-P) to form tetraacyldisaccharide 1,4'-bis-phosphate (lipid IVA). The polypeptide is Tetraacyldisaccharide 4'-kinase (Allorhizobium ampelinum (strain ATCC BAA-846 / DSM 112012 / S4) (Agrobacterium vitis (strain S4))).